The chain runs to 206 residues: Small ribosomal subunit protein uS4 (206 aa).

The 61-residue stretch at 96–156 folds into the S4 RNA-binding domain; it reads SRLDNIVYRL…KKSKNQLRIK (61 aa).

It belongs to the universal ribosomal protein uS4 family. In terms of assembly, part of the 30S ribosomal subunit. Contacts protein S5. The interaction surface between S4 and S5 is involved in control of translational fidelity.

Functionally, one of the primary rRNA binding proteins, it binds directly to 16S rRNA where it nucleates assembly of the body of the 30S subunit. In terms of biological role, with S5 and S12 plays an important role in translational accuracy. This is Small ribosomal subunit protein uS4 from Buchnera aphidicola subsp. Cinara cedri (strain Cc).